The primary structure comprises 792 residues: 5-methyltetrahydropteroyltriglutamate--homocysteine methyltransferase (792 aa).

5-methyltetrahydropteroyltri-L-glutamate is bound by residues arginine 16–lysine 19 and lysine 112. L-homocysteine-binding positions include isoleucine 432–serine 434 and glutamate 485. L-methionine-binding positions include isoleucine 432 to serine 434 and glutamate 485. 5-methyltetrahydropteroyltri-L-glutamate is bound by residues arginine 516–cysteine 517 and tryptophan 562. Aspartate 600 lines the L-homocysteine pocket. Aspartate 600 is an L-methionine binding site. 5-methyltetrahydropteroyltri-L-glutamate is bound at residue glutamate 606. Positions 642, 644, and 666 each coordinate Zn(2+). The active-site Proton donor is the histidine 695. Cysteine 727 contacts Zn(2+).

The protein belongs to the vitamin-B12 independent methionine synthase family. The cofactor is Zn(2+).

The enzyme catalyses 5-methyltetrahydropteroyltri-L-glutamate + L-homocysteine = tetrahydropteroyltri-L-glutamate + L-methionine. It functions in the pathway amino-acid biosynthesis; L-methionine biosynthesis via de novo pathway; L-methionine from L-homocysteine (MetE route): step 1/1. In terms of biological role, catalyzes the transfer of a methyl group from 5-methyltetrahydrofolate to homocysteine resulting in methionine formation. This Cupriavidus necator (Alcaligenes eutrophus) protein is 5-methyltetrahydropteroyltriglutamate--homocysteine methyltransferase.